The following is a 290-amino-acid chain: Cilia- and flagella-associated protein 298 (290 aa).

A Phosphotyrosine modification is found at Tyr264.

It belongs to the CFAP298 family. In terms of assembly, interacts with ZMYND10.

The protein localises to the cytoplasm. It localises to the cytoskeleton. The protein resides in the cilium basal body. In terms of biological role, plays a role in motile cilium function, possibly by acting on outer dynein arm assembly. Seems to be important for initiation rather than maintenance of cilium motility. Required for correct positioning of the cilium at the apical cell surface, suggesting an additional role in the planar cell polarity (PCP) pathway. May suppress canonical Wnt signaling activity. The polypeptide is Cilia- and flagella-associated protein 298 (Homo sapiens (Human)).